The following is a 350-amino-acid chain: Putative ATP-binding protein BRA0745/BS1330_II0738 (350 aa).

The ABC transporter domain occupies 4–234 (VSLRGISKTF…PANKFVAGFI (231 aa)). Residue 36–43 (GPSGCGKS) coordinates ATP.

The protein belongs to the ABC transporter superfamily. The complex is composed of two ATP-binding proteins (BRA0745), two transmembrane proteins (BRA0749) and a solute-binding protein (BRA0748).

The protein localises to the cell inner membrane. Functionally, probably part of an ABC transporter complex. Probably responsible for energy coupling to the transport system. The polypeptide is Putative ATP-binding protein BRA0745/BS1330_II0738 (Brucella suis biovar 1 (strain 1330)).